Here is a 401-residue protein sequence, read N- to C-terminus: NADH-quinone oxidoreductase subunit D (401 aa).

The protein belongs to the complex I 49 kDa subunit family. As to quaternary structure, NDH-1 is composed of 14 different subunits. Subunits NuoB, C, D, E, F, and G constitute the peripheral sector of the complex.

The protein localises to the cell inner membrane. The enzyme catalyses a quinone + NADH + 5 H(+)(in) = a quinol + NAD(+) + 4 H(+)(out). Functionally, NDH-1 shuttles electrons from NADH, via FMN and iron-sulfur (Fe-S) centers, to quinones in the respiratory chain. The immediate electron acceptor for the enzyme in this species is believed to be ubiquinone. Couples the redox reaction to proton translocation (for every two electrons transferred, four hydrogen ions are translocated across the cytoplasmic membrane), and thus conserves the redox energy in a proton gradient. The protein is NADH-quinone oxidoreductase subunit D of Rhodopseudomonas palustris (strain HaA2).